The sequence spans 429 residues: Glutamate-1-semialdehyde 2,1-aminomutase (429 aa).

Lysine 267 carries the N6-(pyridoxal phosphate)lysine modification.

It belongs to the class-III pyridoxal-phosphate-dependent aminotransferase family. HemL subfamily. Homodimer. Requires pyridoxal 5'-phosphate as cofactor.

It is found in the cytoplasm. It catalyses the reaction (S)-4-amino-5-oxopentanoate = 5-aminolevulinate. Its pathway is porphyrin-containing compound metabolism; protoporphyrin-IX biosynthesis; 5-aminolevulinate from L-glutamyl-tRNA(Glu): step 2/2. The protein is Glutamate-1-semialdehyde 2,1-aminomutase of Xanthomonas campestris pv. campestris (strain 8004).